The chain runs to 540 residues: Chaperonin GroEL 3 (540 aa).

ATP-binding positions include Thr30 to Pro33, Lys51, Asp87 to Thr91, Gly415, Asn479 to Ala481, and Asp495.

Belongs to the chaperonin (HSP60) family. Forms a cylinder of 14 subunits composed of two heptameric rings stacked back-to-back. Interacts with the co-chaperonin GroES.

It is found in the cytoplasm. The catalysed reaction is ATP + H2O + a folded polypeptide = ADP + phosphate + an unfolded polypeptide.. Functionally, together with its co-chaperonin GroES, plays an essential role in assisting protein folding. The GroEL-GroES system forms a nano-cage that allows encapsulation of the non-native substrate proteins and provides a physical environment optimized to promote and accelerate protein folding. This Burkholderia cenocepacia (strain HI2424) protein is Chaperonin GroEL 3.